A 510-amino-acid polypeptide reads, in one-letter code: Probable serine/threonine-protein kinase 2 (510 aa).

The Protein kinase domain occupies 111 to 364 (YVLNKKIGKG…ALQALGHQWF (254 aa)). Residues 117 to 125 (IGKGSFSTA) and K140 contribute to the ATP site. D230 functions as the Proton acceptor in the catalytic mechanism. The interval 408 to 428 (NDDIYNNNNNNNQLDPNKNHK) is disordered.

The protein belongs to the protein kinase superfamily. Ser/Thr protein kinase family.

It localises to the membrane. The catalysed reaction is L-seryl-[protein] + ATP = O-phospho-L-seryl-[protein] + ADP + H(+). The enzyme catalyses L-threonyl-[protein] + ATP = O-phospho-L-threonyl-[protein] + ADP + H(+). In Plasmodium falciparum (isolate K1 / Thailand), this protein is Probable serine/threonine-protein kinase 2 (PK2).